Here is a 552-residue protein sequence, read N- to C-terminus: CTP synthase (552 aa).

The segment at 1 to 270 (MTKYVFVTGG…DRIICEELKL (270 aa)) is amidoligase domain. Residue serine 13 participates in CTP binding. Serine 13 is a binding site for UTP. ATP-binding positions include 14–19 (SLGKGI) and aspartate 71. Aspartate 71 and glutamate 144 together coordinate Mg(2+). CTP-binding positions include 151–153 (DIE), 191–196 (KTKPTQ), and lysine 227. UTP contacts are provided by residues 191–196 (KTKPTQ) and lysine 227. A Glutamine amidotransferase type-1 domain is found at 295-547 (TIGMVGKYVD…VEAAFANKQA (253 aa)). Residue glycine 356 coordinates L-glutamine. The active-site Nucleophile; for glutamine hydrolysis is the cysteine 383. L-glutamine is bound by residues 384-387 (LGMQ), glutamate 407, and arginine 473. Residues histidine 520 and glutamate 522 contribute to the active site.

This sequence belongs to the CTP synthase family. In terms of assembly, homotetramer.

The catalysed reaction is UTP + L-glutamine + ATP + H2O = CTP + L-glutamate + ADP + phosphate + 2 H(+). The enzyme catalyses L-glutamine + H2O = L-glutamate + NH4(+). It carries out the reaction UTP + NH4(+) + ATP = CTP + ADP + phosphate + 2 H(+). Its pathway is pyrimidine metabolism; CTP biosynthesis via de novo pathway; CTP from UDP: step 2/2. With respect to regulation, allosterically activated by GTP, when glutamine is the substrate; GTP has no effect on the reaction when ammonia is the substrate. The allosteric effector GTP functions by stabilizing the protein conformation that binds the tetrahedral intermediate(s) formed during glutamine hydrolysis. Inhibited by the product CTP, via allosteric rather than competitive inhibition. Its function is as follows. Catalyzes the ATP-dependent amination of UTP to CTP with either L-glutamine or ammonia as the source of nitrogen. Regulates intracellular CTP levels through interactions with the four ribonucleotide triphosphates. The chain is CTP synthase from Burkholderia ambifaria (strain ATCC BAA-244 / DSM 16087 / CCUG 44356 / LMG 19182 / AMMD) (Burkholderia cepacia (strain AMMD)).